The chain runs to 272 residues: Shikimate dehydrogenase (NADP(+)) (272 aa).

Shikimate is bound by residues 14-16 (SKS) and T61. The active-site Proton acceptor is the K65. E77 contributes to the NADP(+) binding site. 2 residues coordinate shikimate: N86 and D102. NADP(+) contacts are provided by residues 126–130 (GAGGA), 149–154 (NRTVSR), and M213. Shikimate is bound at residue Y215. G237 is a binding site for NADP(+).

Belongs to the shikimate dehydrogenase family. Homodimer.

The catalysed reaction is shikimate + NADP(+) = 3-dehydroshikimate + NADPH + H(+). The protein operates within metabolic intermediate biosynthesis; chorismate biosynthesis; chorismate from D-erythrose 4-phosphate and phosphoenolpyruvate: step 4/7. In terms of biological role, involved in the biosynthesis of the chorismate, which leads to the biosynthesis of aromatic amino acids. Catalyzes the reversible NADPH linked reduction of 3-dehydroshikimate (DHSA) to yield shikimate (SA). The sequence is that of Shikimate dehydrogenase (NADP(+)) from Escherichia coli O45:K1 (strain S88 / ExPEC).